Here is a 377-residue protein sequence, read N- to C-terminus: Actin depolymerising venom protein gelsolin 1 (377 aa).

The N-terminal stretch at 1–26 is a signal peptide; the sequence is MFRQMKLGSLATKLLLACFLVTCTSG. 3 Gelsolin-like repeats span residues 50 to 133, 174 to 243, and 298 to 368; these read FVPV…SEQF, IRVR…SSTS, and EKPL…PTAF.

As to expression, expressed by the venom gland (posterior main gland) (at protein level).

Its subcellular location is the secreted. The polypeptide is Actin depolymerising venom protein gelsolin 1 (Platymeris rhadamanthus (Red spot assassin bug)).